An 81-amino-acid polypeptide reads, in one-letter code: Photosystem I iron-sulfur center (81 aa).

4Fe-4S ferredoxin-type domains are found at residues 2–31 (SHSV…MVPW) and 39–68 (IASS…IRVY). Residues Cys-11, Cys-14, Cys-17, Cys-21, Cys-48, Cys-51, Cys-54, and Cys-58 each coordinate [4Fe-4S] cluster.

In terms of assembly, the cyanobacterial PSI reaction center is composed of one copy each of PsaA,B,C,D,E,F,I,J,K,L,M and X, and forms trimeric complexes. It depends on [4Fe-4S] cluster as a cofactor.

Its subcellular location is the cellular thylakoid membrane. The enzyme catalyses reduced [plastocyanin] + hnu + oxidized [2Fe-2S]-[ferredoxin] = oxidized [plastocyanin] + reduced [2Fe-2S]-[ferredoxin]. In terms of biological role, apoprotein for the two 4Fe-4S centers FA and FB of photosystem I (PSI); essential for photochemical activity. FB is the terminal electron acceptor of PSI, donating electrons to ferredoxin. The C-terminus interacts with PsaA/B/D and helps assemble the protein into the PSI complex. Required for binding of PsaD and PsaE to PSI. PSI is a plastocyanin/cytochrome c6-ferredoxin oxidoreductase, converting photonic excitation into a charge separation, which transfers an electron from the donor P700 chlorophyll pair to the spectroscopically characterized acceptors A0, A1, FX, FA and FB in turn. Mutant proteins with a 3Fe-4S center are unable to reconstitute PSI activity in vivo. The polypeptide is Photosystem I iron-sulfur center (Synechocystis sp. (strain ATCC 27184 / PCC 6803 / Kazusa)).